Consider the following 477-residue polypeptide: PTS system glucose-specific EIICB component (477 aa).

Residues 1–388 (MFKNVFANLQ…FNLDTPGREN (388 aa)) form the PTS EIIC type-1 domain. 10 helical membrane passes run 15–35 (SLML…IGSA), 51–71 (TGGS…ALGF), 76–96 (GVAA…LTAV), 112–132 (HLSD…AYMF), 152–172 (FVPI…SLIW), 191–211 (PILA…FGLH), 250–270 (LSGG…AIWH), 280–300 (IGSI…TEPI), 304–324 (FIIV…LSFP), and 357–377 (FPII…LFII). The region spanning 399-477 (NEIAPYIITA…TAMDECIKNI (79 aa)) is the PTS EIIB type-1 domain. C421 functions as the Phosphocysteine intermediate; for EIIB activity in the catalytic mechanism. The residue at position 421 (C421) is a Phosphocysteine.

It localises to the cell inner membrane. The catalysed reaction is N(pros)-phospho-L-histidyl-[protein] + D-glucose(out) = D-glucose 6-phosphate(in) + L-histidyl-[protein]. In terms of biological role, the phosphoenolpyruvate-dependent sugar phosphotransferase system (sugar PTS), a major carbohydrate active transport system, catalyzes the phosphorylation of incoming sugar substrates concomitantly with their translocation across the cell membrane. The enzyme II complex composed of PtsG and Crr is involved in glucose transport. The polypeptide is PTS system glucose-specific EIICB component (ptsG) (Buchnera aphidicola subsp. Acyrthosiphon pisum (strain APS) (Acyrthosiphon pisum symbiotic bacterium)).